Here is a 325-residue protein sequence, read N- to C-terminus: Probable cell division protein WhiA (325 aa).

The H-T-H motif DNA-binding region spans 273 to 306 (SLEELGALADPPLTKDAVAGRIRRLLALADKRAN).

It belongs to the WhiA family.

Its function is as follows. Involved in cell division and chromosome segregation. In Frankia casuarinae (strain DSM 45818 / CECT 9043 / HFP020203 / CcI3), this protein is Probable cell division protein WhiA.